The chain runs to 199 residues: NADH-quinone oxidoreductase subunit C (199 aa).

It belongs to the complex I 30 kDa subunit family. NDH-1 is composed of 14 different subunits. Subunits NuoB, C, D, E, F, and G constitute the peripheral sector of the complex.

The protein localises to the cell inner membrane. The catalysed reaction is a quinone + NADH + 5 H(+)(in) = a quinol + NAD(+) + 4 H(+)(out). Functionally, NDH-1 shuttles electrons from NADH, via FMN and iron-sulfur (Fe-S) centers, to quinones in the respiratory chain. The immediate electron acceptor for the enzyme in this species is believed to be ubiquinone. Couples the redox reaction to proton translocation (for every two electrons transferred, four hydrogen ions are translocated across the cytoplasmic membrane), and thus conserves the redox energy in a proton gradient. This Cupriavidus pinatubonensis (strain JMP 134 / LMG 1197) (Cupriavidus necator (strain JMP 134)) protein is NADH-quinone oxidoreductase subunit C.